A 189-amino-acid chain; its full sequence is MDQLKQSLLDAPIIEKDGYHYFVHPISDGVPMLRPELLREIVIKIIRKAELEDVDKIVTPAAMGIHISTAVSLMTDIPLVVVRKRQYGLDGEVSLSQVTGYSENEMYVNDVYEGDRVLVLDDVLSTGGTLAALTGALEDIGADICDIVCVIKKEGGENKLADDGYHAKTLINVDVVDGEVVVVDDYGDD.

It belongs to the purine/pyrimidine phosphoribosyltransferase family. Archaeal HPRT subfamily.

Its function is as follows. May catalyze a purine salvage reaction, the substrate is unknown. The polypeptide is HGPRTase-like protein (Halomicrobium mukohataei (strain ATCC 700874 / DSM 12286 / JCM 9738 / NCIMB 13541) (Haloarcula mukohataei)).